The primary structure comprises 112 residues: T cell receptor alpha variable 9-2 (112 aa).

Residues 1-20 form the signal peptide; that stretch reads MNYSPGLVSLILLLLGRTRG. In terms of domain architecture, Ig-like spans 21-112; it reads DSVTQMEGPV…DSAVYFCALS (92 aa). Residue asparagine 41 is glycosylated (N-linked (GlcNAc...) asparagine). A disulfide bridge links cysteine 42 with cysteine 109.

Alpha-beta TR is a heterodimer composed of an alpha and beta chain; disulfide-linked. The alpha-beta TR is associated with the transmembrane signaling CD3 coreceptor proteins to form the TR-CD3 (TcR or TCR). The assembly of alpha-beta TR heterodimers with CD3 occurs in the endoplasmic reticulum where a single alpha-beta TR heterodimer associates with one CD3D-CD3E heterodimer, one CD3G-CD3E heterodimer and one CD247 homodimer forming a stable octameric structure. CD3D-CD3E and CD3G-CD3E heterodimers preferentially associate with TR alpha and TR beta chains, respectively. The association of the CD247 homodimer is the last step of TcR assembly in the endoplasmic reticulum and is required for transport to the cell surface.

It localises to the cell membrane. V region of the variable domain of T cell receptor (TR) alpha chain that participates in the antigen recognition. Alpha-beta T cell receptors are antigen specific receptors which are essential to the immune response and are present on the cell surface of T lymphocytes. Recognize peptide-major histocompatibility (MH) (pMH) complexes that are displayed by antigen presenting cells (APC), a prerequisite for efficient T cell adaptive immunity against pathogens. Binding of alpha-beta TR to pMH complex initiates TR-CD3 clustering on the cell surface and intracellular activation of LCK that phosphorylates the ITAM motifs of CD3G, CD3D, CD3E and CD247 enabling the recruitment of ZAP70. In turn ZAP70 phosphorylates LAT, which recruits numerous signaling molecules to form the LAT signalosome. The LAT signalosome propagates signal branching to three major signaling pathways, the calcium, the mitogen-activated protein kinase (MAPK) kinase and the nuclear factor NF-kappa-B (NF-kB) pathways, leading to the mobilization of transcription factors that are critical for gene expression and essential for T cell growth and differentiation. The T cell repertoire is generated in the thymus, by V-(D)-J rearrangement. This repertoire is then shaped by intrathymic selection events to generate a peripheral T cell pool of self-MH restricted, non-autoaggressive T cells. Post-thymic interaction of alpha-beta TR with the pMH complexes shapes TR structural and functional avidity. This is T cell receptor alpha variable 9-2 from Homo sapiens (Human).